A 359-amino-acid chain; its full sequence is Nicotinate-nucleotide--dimethylbenzimidazole phosphoribosyltransferase (359 aa).

The Proton acceptor role is filled by E318.

This sequence belongs to the CobT family. Homodimer.

The enzyme catalyses 5,6-dimethylbenzimidazole + nicotinate beta-D-ribonucleotide = alpha-ribazole 5'-phosphate + nicotinate + H(+). It functions in the pathway nucleoside biosynthesis; alpha-ribazole biosynthesis; alpha-ribazole from 5,6-dimethylbenzimidazole: step 1/2. Its function is as follows. Catalyzes the synthesis of alpha-ribazole-5'-phosphate from nicotinate mononucleotide (NAMN) and 5,6-dimethylbenzimidazole (DMB). This is Nicotinate-nucleotide--dimethylbenzimidazole phosphoribosyltransferase from Escherichia coli O157:H7.